A 151-amino-acid polypeptide reads, in one-letter code: Small ribosomal subunit protein eS6 (151 aa).

It belongs to the eukaryotic ribosomal protein eS6 family.

The sequence is that of Small ribosomal subunit protein eS6 from Pyrobaculum calidifontis (strain DSM 21063 / JCM 11548 / VA1).